The primary structure comprises 189 residues: dCTP deaminase (189 aa).

DCTP-binding positions include 112 to 117, 136 to 138, Gln-157, Tyr-171, and Gln-181; these read KSTYAR and TLE. Glu-138 (proton donor/acceptor) is an active-site residue.

Belongs to the dCTP deaminase family. In terms of assembly, homotrimer.

It catalyses the reaction dCTP + H2O + H(+) = dUTP + NH4(+). It participates in pyrimidine metabolism; dUMP biosynthesis; dUMP from dCTP (dUTP route): step 1/2. Catalyzes the deamination of dCTP to dUTP. This Nitrosospira multiformis (strain ATCC 25196 / NCIMB 11849 / C 71) protein is dCTP deaminase.